The chain runs to 764 residues: Thyrotropin receptor (764 aa).

An N-terminal signal peptide occupies residues Met1–Gly20. Residues Gly21–Gly413 lie on the Extracellular side of the membrane. A disulfide bond links Cys31 and Cys41. Residues Asn77 and Asn99 are each glycosylated (N-linked (GlcNAc...) asparagine). LRR repeat units lie at residues Leu125–Ser149, Thr150–Gly174, Cys176–Gly199, Lys201–Gly223, Tyr225–His248, and Lys250–His271. N-linked (GlcNAc...) asparagine glycosylation is found at Asn177 and Asn198. Asn302 is a glycosylation site (N-linked (GlcNAc...) asparagine). At Tyr385 the chain carries Sulfotyrosine. Residues Tyr414–Thr441 form a helical membrane-spanning segment. The Cytoplasmic portion of the chain corresponds to Ser442–Arg450. A helical transmembrane segment spans residues Phe451–Val473. The Extracellular segment spans residues Asp474 to Cys494. Cys494 and Cys569 form a disulfide bridge. A helical transmembrane segment spans residues Asn495–Leu517. At Glu518–His537 the chain is on the cytoplasmic side. A helical transmembrane segment spans residues Ala538–Ile560. Topologically, residues Ser561 to Leu580 are extracellular. Residues Ala581 to Val602 traverse the membrane as a helical segment. Residues Lys603 to Arg625 lie on the Cytoplasmic side of the membrane. Residues Met626–Met649 form a helical membrane-spanning segment. Over Asn650–Lys660 the chain is Extracellular. Residues Ile661–Thr682 traverse the membrane as a helical segment. Over Lys683–Leu764 the chain is Cytoplasmic. Residues Thr762–Leu764 carry the PDZ-binding motif.

Belongs to the G-protein coupled receptor 1 family. FSH/LSH/TSH subfamily. Interacts with heterodimer GPHA2:GPHB5; this interaction stimulates cAMP production. Interacts (via the PDZ-binding motif) with SCRIB; regulates TSHR trafficking and function. In terms of processing, glycosylated. Post-translationally, sulfated. Sulfation on Tyr-385 plays a role in thyrotropin receptor binding and activation.

It is found in the cell membrane. The protein localises to the basolateral cell membrane. Its function is as follows. Receptor for the thyroid-stimulating hormone (TSH) or thyrotropin. Also acts as a receptor for the heterodimeric glycoprotein hormone (GPHA2:GPHB5) or thyrostimulin. The activity of this receptor is mediated by G proteins which activate adenylate cyclase. Plays a central role in controlling thyroid cell metabolism. In Canis lupus familiaris (Dog), this protein is Thyrotropin receptor (TSHR).